The primary structure comprises 283 residues: Putative S-adenosyl-L-methionine-dependent methyltransferase SAV_474/SAV474 (283 aa).

Residues D121 and 150-151 contribute to the S-adenosyl-L-methionine site; that span reads DL. Residues 258–283 form a disordered region; it reads AAYGRPISTPPQREERPGGLISAVRR.

It belongs to the UPF0677 family.

Its function is as follows. Exhibits S-adenosyl-L-methionine-dependent methyltransferase activity. This chain is Putative S-adenosyl-L-methionine-dependent methyltransferase SAV_474/SAV474, found in Streptomyces avermitilis (strain ATCC 31267 / DSM 46492 / JCM 5070 / NBRC 14893 / NCIMB 12804 / NRRL 8165 / MA-4680).